Reading from the N-terminus, the 516-residue chain is Putative Rieske 2Fe-2S iron-sulfur protein MT3926 (516 aa).

In terms of domain architecture, Rieske spans 429 to 516 (LYTFFKCLTD…RGHQLRSSRP (88 aa)). Positions 469, 471, 489, and 492 each coordinate [2Fe-2S] cluster.

[2Fe-2S] cluster serves as cofactor.

This chain is Putative Rieske 2Fe-2S iron-sulfur protein MT3926, found in Mycobacterium tuberculosis (strain CDC 1551 / Oshkosh).